Here is a 123-residue protein sequence, read N- to C-terminus: Testis-expressed protein 12 (123 aa).

The disordered stretch occupies residues 1–41 (MMANHLVKPDSRNCKRARELEPQVSDSPQVSSLGKSESSLS). Residues 7-21 (VKPDSRNCKRARELE) are compositionally biased toward basic and acidic residues. Residues 31-41 (SSLGKSESSLS) show a composition bias toward low complexity.

Interacts with SYCE2. In terms of tissue distribution, testis (at protein level). Detected in ovary. Expressed in both male and female germ cells.

The protein resides in the chromosome. In terms of biological role, component of the transverse central element of synaptonemal complexes (SCS), formed between homologous chromosomes during meiotic prophase. Requires SYCP1 in order to be incorporated into the central element. This is Testis-expressed protein 12 (Tex12) from Mus musculus (Mouse).